We begin with the raw amino-acid sequence, 310 residues long: p-hydroxybenzoic acid efflux pump subunit AaeA (310 aa).

Residues 12–32 form a helical membrane-spanning segment; the sequence is AITLVLVILAFIAIFRAWVYY.

It belongs to the membrane fusion protein (MFP) (TC 8.A.1) family.

It localises to the cell inner membrane. Forms an efflux pump with AaeB. The chain is p-hydroxybenzoic acid efflux pump subunit AaeA from Salmonella heidelberg (strain SL476).